Here is a 335-residue protein sequence, read N- to C-terminus: Dolichyl-diphosphooligosaccharide--protein glycosyltransferase subunit MAGT1 (335 aa).

Positions 1 to 29 (MASPRWFWSVCAIAAVALLLVSKVPSASA) are cleaved as a signal peptide. The Extracellular portion of the chain corresponds to 30–184 (QRKKEMVLSE…DVNIRVIRPP (155 aa)). Residues 47–175 (WANKRPVIRM…IARWIADRTD (129 aa)) form the Thioredoxin domain. N71 is a glycosylation site (N-linked (GlcNAc...) asparagine). C87 and C90 are oxidised to a cystine. The chain crosses the membrane as a helical span at residues 185–205 (NYAGPLMLGLLLAVIGGLVYL). The Cytoplasmic segment spans residues 206–209 (RRSN). Residues 210-230 (MEFLFNKTGWAFAALCFVLAM) traverse the membrane as a helical segment. Topologically, residues 231–270 (TSGQMWNHIRGPPYAHKNPHTGHVNYIHGSSQAQFVAETH) are extracellular. The helical transmembrane segment at 271–291 (IVLLFNGGVTLGMVLLCEAAT) threads the bilayer. The Cytoplasmic portion of the chain corresponds to 292 to 300 (SDMDIGKRR). A helical membrane pass occupies residues 301-321 (MMCIAGIGLVVLFFSWMLSIF). Residues 322–335 (RSKYHGYPYSFLMS) are Extracellular-facing.

It belongs to the OST3/OST6 family. As to quaternary structure, accessory component of the STT3B-containing form of the oligosaccharyltransferase (OST) complex. OST exists in two different complex forms which contain common core subunits RPN1, RPN2, OST48, OST4, DAD1 and TMEM258, either STT3A or STT3B as catalytic subunits, and form-specific accessory subunits. OST can form stable complexes with the Sec61 complex or with both the Sec61 and TRAP complexes. The association of TUSC3 or MAGT1 with the STT3B-containing complex seems to be mutually exclusvice. Expressed at high levels in kidney, colon, heart and liver. Expressed at lower levels in intestine, spleen, brain and lung.

Its subcellular location is the cell membrane. The protein resides in the endoplasmic reticulum. It localises to the endoplasmic reticulum membrane. It participates in protein modification; protein glycosylation. Its function is as follows. Accessory component of the STT3B-containing form of the N-oligosaccharyl transferase (OST) complex which catalyzes the transfer of a high mannose oligosaccharide from a lipid-linked oligosaccharide donor to an asparagine residue within an Asn-X-Ser/Thr consensus motif in nascent polypeptide chains. Involved in N-glycosylation of STT3B-dependent substrates. Specifically required for the glycosylation of a subset of acceptor sites that are near cysteine residues; in this function seems to act redundantly with TUSC3. In its oxidized form proposed to form transient mixed disulfides with a glycoprotein substrate to facilitate access of STT3B to the unmodified acceptor site. Also has oxidoreductase-independent functions in the STT3B-containing OST complex possibly involving substrate recognition. Could indirectly play a role in Mg(2+) transport in epithelial cells. The sequence is that of Dolichyl-diphosphooligosaccharide--protein glycosyltransferase subunit MAGT1 from Mus musculus (Mouse).